We begin with the raw amino-acid sequence, 283 residues long: Pantothenate synthetase (283 aa).

Position 31-38 (31-38) interacts with ATP; that stretch reads MGALHDGH. The active-site Proton donor is His-38. Gln-62 is a binding site for (R)-pantoate. Gln-62 serves as a coordination point for beta-alanine. 148–151 is an ATP binding site; sequence GKKD. Gln-154 serves as a coordination point for (R)-pantoate. ATP is bound by residues Ile-177 and 185 to 188; that span reads KSSR.

This sequence belongs to the pantothenate synthetase family. As to quaternary structure, homodimer.

It is found in the cytoplasm. The catalysed reaction is (R)-pantoate + beta-alanine + ATP = (R)-pantothenate + AMP + diphosphate + H(+). It participates in cofactor biosynthesis; (R)-pantothenate biosynthesis; (R)-pantothenate from (R)-pantoate and beta-alanine: step 1/1. In terms of biological role, catalyzes the condensation of pantoate with beta-alanine in an ATP-dependent reaction via a pantoyl-adenylate intermediate. This is Pantothenate synthetase from Oceanobacillus iheyensis (strain DSM 14371 / CIP 107618 / JCM 11309 / KCTC 3954 / HTE831).